A 33-amino-acid polypeptide reads, in one-letter code: MNLEVIAQLTVLSLIVLSGPLVIILLAANRGNL.

The chain crosses the membrane as a helical span at residues 5–25 (VIAQLTVLSLIVLSGPLVIIL).

Belongs to the Psb30/Ycf12 family. As to quaternary structure, PSII is composed of 1 copy each of membrane proteins PsbA, PsbB, PsbC, PsbD, PsbE, PsbF, PsbH, PsbI, PsbJ, PsbK, PsbL, PsbM, PsbT, PsbX, PsbY, PsbZ, Psb30/Ycf12, peripheral proteins of the oxygen-evolving complex and a large number of cofactors. It forms dimeric complexes.

Its subcellular location is the plastid. The protein localises to the chloroplast thylakoid membrane. Functionally, a core subunit of photosystem II (PSII), probably helps stabilize the reaction center. This Chlorokybus atmophyticus (Soil alga) protein is Photosystem II reaction center protein Psb30.